We begin with the raw amino-acid sequence, 279 residues long: Probable endonuclease 4 (279 aa).

Residues histidine 69, histidine 109, glutamate 145, aspartate 179, histidine 182, histidine 216, aspartate 229, histidine 231, and glutamate 261 each coordinate Zn(2+).

It belongs to the AP endonuclease 2 family. Zn(2+) is required as a cofactor.

It carries out the reaction Endonucleolytic cleavage to 5'-phosphooligonucleotide end-products.. Its function is as follows. Endonuclease IV plays a role in DNA repair. It cleaves phosphodiester bonds at apurinic or apyrimidinic (AP) sites, generating a 3'-hydroxyl group and a 5'-terminal sugar phosphate. The sequence is that of Probable endonuclease 4 from Chlorobium phaeovibrioides (strain DSM 265 / 1930) (Prosthecochloris vibrioformis (strain DSM 265)).